We begin with the raw amino-acid sequence, 228 residues long: Probable C4-dicarboxylate response regulator DctR (228 aa).

The region spanning 7–123 (TVLLIEDDPM…RMKQALEQYR (117 aa)) is the Response regulatory domain. Asp-58 is subject to 4-aspartylphosphate. The H-T-H motif DNA-binding region spans 180-199 (AEEVADGVGIARVTARRYLE).

In terms of processing, phosphorylated by DctS.

The protein resides in the cytoplasm. Functionally, member of the two-component regulatory system DctS/DctR. Essential for expression of DctP. The protein is Probable C4-dicarboxylate response regulator DctR (dctR) of Priestia megaterium (Bacillus megaterium).